A 651-amino-acid polypeptide reads, in one-letter code: PTS system sucrose-specific EIIBCA component (651 aa).

In terms of domain architecture, PTS EIIB type-1 spans 3–86 (HQEVADRVLN…IVKTGLKEVT (84 aa)). Catalysis depends on cysteine 25, which acts as the Phosphocysteine intermediate; for EIIB activity. The next 10 helical transmembrane spans lie at 109 to 129 (VLSDIFIPIVPALVAGGLLMA), 158 to 178 (MINAMASAPFTFLPILLGFSA), 182 to 202 (FGGNPYLGATMGMIMVLPSLV), 204 to 224 (GYSVATTMAAGKMVYWNVFGL), 226 to 246 (VAQAGYQGQVLPVLGVAFILA), 264 to 284 (FTPMFAIVITGFLTFTIVGPV), 303 to 323 (TGWIGMGIFGLLYSAIVITGL), 345 to 365 (FIFPVASMANIGQGAATLAIF), 404 to 424 (FVFAAIASGIASAFLGLFHVL), and 444 to 464 (IPAFMLSAVISFVVAFIPTFI). One can recognise a PTS EIIC type-1 domain in the interval 121 to 481 (LVAGGLLMAL…DDRDQVKSPA (361 aa)). Residues 510 to 614 (DQVFSAEIMG…DPTVMLIVTN (105 aa)) form the PTS EIIA type-1 domain. The Tele-phosphohistidine intermediate; for EIIA activity role is filled by histidine 562.

Its subcellular location is the cell membrane. The catalysed reaction is N(pros)-phospho-L-histidyl-[protein](out) + sucrose = sucrose 6(G)-phosphate(in) + L-histidyl-[protein]. Its function is as follows. The phosphoenolpyruvate-dependent sugar phosphotransferase system (sugar PTS), a major carbohydrate active transport system, catalyzes the phosphorylation of incoming sugar substrates concomitantly with their translocation across the cell membrane. This system is involved in sucrose transport. The sequence is that of PTS system sucrose-specific EIIBCA component (scrA) from Pediococcus pentosaceus.